The chain runs to 427 residues: Nucleolar and spindle-associated protein 1 (427 aa).

A disordered region spans residues 41-190; that stretch reads AHLNPETRKE…LGNNKRTSAT (150 aa). Residues 43 to 55 show a composition bias toward basic and acidic residues; sequence LNPETRKENKNQD. A compositionally biased stretch (basic residues) spans 83 to 96; sequence TKTRRRRRKKHKTI. Residues 119-128 are compositionally biased toward low complexity; the sequence is NFQNQENQEN. The residue at position 139 (serine 139) is a Phosphoserine. Residues 159–179 show a composition bias toward basic and acidic residues; it reads NDIKDSKKPLEKRSLCTDEFS. Positions 181-190 are enriched in polar residues; that stretch reads LGNNKRTSAT. Threonine 191 carries the phosphothreonine modification. The disordered stretch occupies residues 235-312; that stretch reads IVTPVPPRGR…QAVFRTPKSK (78 aa). The interval 243 to 367 is interaction with microtubules; it reads GRLSVPCTPA…HKGKLKPWGQ (125 aa). The residue at position 246 (serine 246) is a Phosphoserine. Threonine 250 is modified (phosphothreonine). Residues 252-264 show a composition bias toward polar residues; it reads ARQQCPQGHSATK. Serine 261 carries the phosphoserine modification. 2 positions are modified to phosphothreonine: threonine 323 and threonine 334. Serine 337 and serine 348 each carry phosphoserine. Residues 354–427 are disordered; that stretch reads NYKPHKGKLK…RRNLGVTKAQ (74 aa). Positions 369 to 375 match the KEN box motif; it reads KENNSLN. The stretch at 393–425 forms a coiled coil; that stretch reads LQTREERWKRQEQERKEKKEKLLEARRNLGVTK. Residues 394–419 show a composition bias toward basic and acidic residues; it reads QTREERWKRQEQERKEKKEKLLEARR.

The protein belongs to the NUSAP family. As to quaternary structure, interacts with DNA and microtubules. Microtubule bundling is inhibited by IPO7, KPNA2 and KPNB1 while association with DNA is also inhibited by IPO7 and KPNA2. Ubiquitinated. Ubiquitination by FZR1 may lead to proteasome-dependent degradation of this protein.

The protein resides in the cytoplasm. Its subcellular location is the nucleus. It is found in the nucleolus. The protein localises to the cytoskeleton. It localises to the spindle. The protein resides in the chromosome. In terms of biological role, microtubule-associated protein with the capacity to bundle and stabilize microtubules. May associate with chromosomes and promote the organization of mitotic spindle microtubules around them. This chain is Nucleolar and spindle-associated protein 1 (Nusap1), found in Mus musculus (Mouse).